The following is a 215-amino-acid chain: Large ribosomal subunit protein uL3 (215 aa).

At glutamine 156 the chain carries N5-methylglutamine.

This sequence belongs to the universal ribosomal protein uL3 family. Part of the 50S ribosomal subunit. Forms a cluster with proteins L14 and L19. Methylated by PrmB.

Functionally, one of the primary rRNA binding proteins, it binds directly near the 3'-end of the 23S rRNA, where it nucleates assembly of the 50S subunit. In Xylella fastidiosa (strain M12), this protein is Large ribosomal subunit protein uL3.